The following is a 435-amino-acid chain: Glutamyl-tRNA reductase (435 aa).

Substrate is bound by residues 49–52 (TCNR), Ser109, 114–116 (ETQ), and Gln120. Residue Cys50 is the Nucleophile of the active site. 189 to 194 (GAGEMS) contributes to the NADP(+) binding site.

This sequence belongs to the glutamyl-tRNA reductase family. Homodimer.

The enzyme catalyses (S)-4-amino-5-oxopentanoate + tRNA(Glu) + NADP(+) = L-glutamyl-tRNA(Glu) + NADPH + H(+). It participates in porphyrin-containing compound metabolism; protoporphyrin-IX biosynthesis; 5-aminolevulinate from L-glutamyl-tRNA(Glu): step 1/2. Catalyzes the NADPH-dependent reduction of glutamyl-tRNA(Glu) to glutamate 1-semialdehyde (GSA). In Listeria monocytogenes serovar 1/2a (strain ATCC BAA-679 / EGD-e), this protein is Glutamyl-tRNA reductase.